Reading from the N-terminus, the 1868-residue chain is Inactive histone-lysine N-methyltransferase 2E (1868 aa).

Positions aspartate 63–tyrosine 66 match the HCFC1-binding motif (HBM) motif. Residues valine 118 to arginine 166 form a PHD-type zinc finger. Zn(2+) is bound by residues cysteine 121, cysteine 123, cysteine 135, cysteine 138, histidine 143, cysteine 146, cysteine 160, and cysteine 163. Disordered regions lie at residues arginine 178 to glutamate 197, alanine 217 to serine 268, and glycine 308 to arginine 329. The SET domain maps to proline 330–aspartate 447. The O-linked (GlcNAc) serine glycan is linked to serine 435. The O-linked (GlcNAc) threonine glycan is linked to threonine 440. Residues lysine 472–isoleucine 504 form a disordered region. The segment covering lysine 494–isoleucine 504 has biased composition (basic and acidic residues). Residues valine 559–lysine 613 adopt a coiled-coil conformation. A compositionally biased stretch (basic residues) spans asparagine 646 to threonine 670. The segment at asparagine 646–proline 682 is disordered. Serine 837 and serine 845 each carry phosphoserine. Residues tyrosine 884–proline 908 are compositionally biased toward low complexity. Disordered stretches follow at residues tyrosine 884–arginine 924 and serine 1038–valine 1068. Over residues proline 1049–valine 1068 the composition is skewed to polar residues. Serine 1070 is subject to Phosphoserine. Disordered regions lie at residues lysine 1165–alanine 1222, serine 1236–isoleucine 1315, proline 1334–glutamine 1565, and valine 1585–proline 1842. Positions serine 1184–glycine 1197 are enriched in low complexity. The segment covering serine 1203–glutamine 1213 has biased composition (polar residues). Serine 1282 is modified (phosphoserine). Positions serine 1282 to glycine 1291 are enriched in basic and acidic residues. Low complexity-rich tracts occupy residues serine 1294–serine 1312 and proline 1348–glycine 1363. A Phosphoserine modification is found at serine 1364. Polar residues-rich tracts occupy residues alanine 1389–alanine 1421, histidine 1451–threonine 1463, and serine 1488–arginine 1498. A compositionally biased stretch (low complexity) spans alanine 1506–alanine 1518. Polar residues predominate over residues threonine 1519–threonine 1547. The segment covering alanine 1548 to serine 1558 has biased composition (pro residues). The segment covering valine 1585–valine 1603 has biased composition (polar residues). The segment covering valine 1631–glycine 1642 has biased composition (pro residues). The segment covering glutamine 1647–serine 1656 has biased composition (polar residues). Pro residues predominate over residues leucine 1682–alanine 1692. Polar residues predominate over residues glutamine 1706–valine 1716. Positions alanine 1719–alanine 1732 are enriched in pro residues. A compositionally biased stretch (polar residues) spans glutamine 1806 to alanine 1816.

The protein belongs to the class V-like SAM-binding methyltransferase superfamily. Histone-lysine methyltransferase family. TRX/MLL subfamily. As to quaternary structure, component of a complex composed of KMT2E, OGT and USP7; the complex stabilizes KMT2E, preventing KMT2E ubiquitination and proteasomal-mediated degradation. Interacts (via N-terminus) with OGT (via TRP repeats). Interacts with deubiquitinating enzyme USP7 (via MATH domain). Interacts (via HBM motif) with HCFC1 (via Kelch domain). Interacts with E2F1; the interaction is probably indirect and is mediated via HCFC1. In terms of processing, ubiquitinated. Deubiquitinated by USP7. O-glycosylated at Ser-435 and Thr-440 in the SET domain by OGT which probably prevents KMT2E proteasomal-mediated degradation.

It is found in the chromosome. It localises to the cytoplasm. Its subcellular location is the cytoskeleton. The protein resides in the microtubule organizing center. The protein localises to the centrosome. It is found in the nucleus speckle. Functionally, associates with chromatin regions downstream of transcriptional start sites of active genes and thus regulates gene transcription. Chromatin interaction is mediated via the binding to tri-methylated histone H3 at 'Lys-4' (H3K4me3). Key regulator of hematopoiesis involved in terminal myeloid differentiation and in the regulation of hematopoietic stem cell (HSCs) self-renewal by a mechanism that involves DNA methylation. Also acts as an important cell cycle regulator, participating in cell cycle regulatory network machinery at multiple cell cycle stages including G1/S transition, S phase progression and mitotic entry. Recruited to E2F1 responsive promoters by HCFC1 where it stimulates tri-methylation of histone H3 at 'Lys-4' and transcriptional activation and thereby facilitates G1 to S phase transition. During myoblast differentiation, required to suppress inappropriate expression of S-phase-promoting genes and maintain expression of determination genes in quiescent cells. The chain is Inactive histone-lysine N-methyltransferase 2E (Kmt2e) from Mus musculus (Mouse).